The sequence spans 31 residues: Cytochrome b6-f complex subunit 6 (31 aa).

The helical transmembrane segment at 4-24 (VISYLSLLFISFLFALTLFIV) threads the bilayer.

Belongs to the PetL family. As to quaternary structure, the 4 large subunits of the cytochrome b6-f complex are cytochrome b6, subunit IV (17 kDa polypeptide, PetD), cytochrome f and the Rieske protein, while the 4 small subunits are PetG, PetL, PetM and PetN. The complex functions as a dimer.

The protein localises to the plastid. The protein resides in the chloroplast thylakoid membrane. Its function is as follows. Component of the cytochrome b6-f complex, which mediates electron transfer between photosystem II (PSII) and photosystem I (PSI), cyclic electron flow around PSI, and state transitions. PetL is important for photoautotrophic growth as well as for electron transfer efficiency and stability of the cytochrome b6-f complex. The sequence is that of Cytochrome b6-f complex subunit 6 from Chara vulgaris (Common stonewort).